A 214-amino-acid chain; its full sequence is GTP-binding protein ypt3 (214 aa).

Position 17-24 (Gly-17–Ser-24) interacts with GTP. The Effector region motif lies at Ser-39–Phe-47. Phosphothreonine is present on Thr-42. GTP-binding positions include Asp-65 to Gln-69 and Asn-123 to Asp-126. S-geranylgeranyl cysteine attachment occurs at residues Cys-213 and Cys-214.

The protein belongs to the small GTPase superfamily. Rab family.

Its subcellular location is the cell membrane. It localises to the endosome membrane. The protein resides in the golgi apparatus membrane. It is found in the cytoplasm. The protein localises to the nucleus. In terms of biological role, has a role in retrograde traffricking of proteins from the endosome to the Golgi. Involved in the secretory pathway where it has a role in acid phosphatase secretion. The protein is GTP-binding protein ypt3 (ypt3) of Schizosaccharomyces pombe (strain 972 / ATCC 24843) (Fission yeast).